Reading from the N-terminus, the 468-residue chain is Cysteine--tRNA ligase (468 aa).

Cys29 is a binding site for Zn(2+). The 'HIGH' region motif lies at 31-41 (PTVYNYIHIGN). The Zn(2+) site is built by Cys209, His234, and Glu238. Positions 266 to 270 (KMSKS) match the 'KMSKS' region motif. Lys269 provides a ligand contact to ATP. A Phosphoserine modification is found at Ser270.

It belongs to the class-I aminoacyl-tRNA synthetase family. As to quaternary structure, monomer. It depends on Zn(2+) as a cofactor.

The protein resides in the cytoplasm. The enzyme catalyses tRNA(Cys) + L-cysteine + ATP = L-cysteinyl-tRNA(Cys) + AMP + diphosphate. This Oceanobacillus iheyensis (strain DSM 14371 / CIP 107618 / JCM 11309 / KCTC 3954 / HTE831) protein is Cysteine--tRNA ligase.